The sequence spans 875 residues: MSDIDQRLREDVHLLGELLGETIRQQHGEAFLQKIEDIRHSAKADRRGEGEQLSSTLGDLAEEDLLPVARAFNQFLNLANIAEQYQLIHRRDTDQPEPFEARVLPELLARLKAAGHGNDALARQLARLDIQLVLTAHPTEVARRTLIQKYDAIAAQLAAQDHRDLIPAERQQVRERLRRLIAEAWHTEEIRRTRPTPVDEAKWGFAVIEHSLWQAVPNHLRKVDKALFEATGLRLPLESAPVRFASWMGGDRDGNPNVTAAVTREVLLLARWMAADLFLRDIDYLAAELSMQQASGALREQVGDSAEPYRALLKQLRDRLRATRAWAHASLAGPQPASAAVLVDNRDLIAPLELCYQSLHACGMGVIADGPLLDSLRRAVTFGLFLVRLDVRQDAARHRDALSEITDYLGLGRYADWDEERRIEFLQHELKNRRPLLPAHFKPAAETAEVLATCREIAAAPAASLGSYVISMAGAASDVLAVQLLLKEAGLTRPMRVVPLFETLADLDNAGPVMERLLGLPGYRAGLHGPQEVMIGYSDSAKDAGTTAAAWAQYRAQENLVRICREHQVELLLFHGRGGTVGRGGGPAHAAILSQPPGSVGGRFRTTEQGEMIRFKFGLPGIAEQNLNLYLAAVLEATLLPPPPPEPAWRALMDQLAADGVKAYRGVVRDNPEFVEYFRQSTPEQELGRLPLGSRPAKRRAGGIESLRAIPWIFGWTQTRLMLPAWLGWETALSNALARGQADLLAQMREQWPFFRTRIDMLEMVLAKADAQIAEAYDQRLVQPRLLPLGAHLRDLLSQSCQVVLGLTGQQVLLAHSPETLEFIRLRNTYLDPLHRLQAELLARSRSREAALDSPLEQALLVTVAGIAAGLRNTG.

Active-site residues include His137 and Lys542.

The protein belongs to the PEPCase type 1 family. Requires Mg(2+) as cofactor.

It carries out the reaction oxaloacetate + phosphate = phosphoenolpyruvate + hydrogencarbonate. Forms oxaloacetate, a four-carbon dicarboxylic acid source for the tricarboxylic acid cycle. This is Phosphoenolpyruvate carboxylase from Pseudomonas entomophila (strain L48).